A 311-amino-acid chain; its full sequence is Olfactory receptor 10G9 (311 aa).

Over 1–23 the chain is Extracellular; sequence MSKTSLVTAFILTGLPHAPGLDA. Residues 24 to 44 form a helical membrane-spanning segment; sequence PLFGIFLVVYVLTVLGNLLIL. At 45–52 the chain is on the cytoplasmic side; the sequence is LVIRVDSH. The helical transmembrane segment at 53–73 threads the bilayer; that stretch reads LHTPMYYFLTNLSFIDMWFST. Residues 74-98 are Extracellular-facing; it reads VTVPKMLMTLVSPSGRAISFHSCVA. Cys-96 and Cys-188 form a disulfide bridge. Residues 99–119 form a helical membrane-spanning segment; that stretch reads QLYFFHFLGSTECFLYTVMSY. The Cytoplasmic segment spans residues 120 to 138; it reads DRYLAISYPLRYTSMMSGS. A helical transmembrane segment spans residues 139–159; the sequence is RCALLATSTWLSGSLHSAVQT. At 160 to 196 the chain is on the extracellular side; that stretch reads ILTFHLPYCGPNQIQHYLCDAPPILKLACADTSANEM. Residues 197–216 traverse the membrane as a helical segment; it reads VIFVDIGLVASGCFLLIVLS. At 217 to 236 the chain is on the cytoplasmic side; the sequence is YVSIVCSILRIHTSEGRHRA. A helical transmembrane segment spans residues 237-257; it reads FQTCASHCIVVLCFFVPCVFI. The Extracellular portion of the chain corresponds to 258–268; it reads YLRPGSRDVVD. Residues 269-289 traverse the membrane as a helical segment; that stretch reads GVVAIFYTVLTPLLNPVVYTL. Topologically, residues 290–311 are cytoplasmic; the sequence is RNKEVKKAVLKLRDKVAHSQGE.

This sequence belongs to the G-protein coupled receptor 1 family.

Its subcellular location is the cell membrane. In terms of biological role, odorant receptor. In Homo sapiens (Human), this protein is Olfactory receptor 10G9 (OR10G9).